The following is a 351-amino-acid chain: CCN family member 3 (351 aa).

A signal peptide spans 1–21 (MSVFLRKQCLCLGFLLLHLLN). Residues 25–99 (ATLRCPSRCP…NNETGICMVP (75 aa)) form the IGFBP N-terminal domain. Intrachain disulfides connect C29–C55, C33–C57, C37–C58, C44–C61, C69–C83, and C75–C96. Residue N91 is glycosylated (N-linked (GlcNAc...) asparagine). The region spanning 102 to 168 (DNCVFDGVIY…GECCEKWTCG (67 aa)) is the VWFC domain. The TSP type-1 domain maps to 199 to 244 (NCIEQTTEWSACSKSCGMGLSTRVTNRNLQCEMVKQTRLCMVRPCE). The S-palmitoyl cysteine moiety is linked to residue C238. 5 disulfide bridges follow: C258-C295, C275-C309, C286-C325, C289-C327, and C294-C331. Positions 258–332 (CLRTKKSLKS…GTCTCHSNCP (75 aa)) constitute a CTCK domain. An N-linked (GlcNAc...) asparagine glycan is attached at N274.

This sequence belongs to the CCN family. Interacts with FBLN1. Interacts (via CTCK domain) with NOTCH1 (via the EGF-like repeat region). Interacts with GJA1/CX43. Interacts with ITGA5:ITGB1, ITGAV:ITGB3 and ITGAV:ITGB5. Interacts with ZDHHC22; the interaction may lead to CCN3 palmitoylation. May be palmitoylated on Cys-238, which is important for extracellular secretion. In terms of tissue distribution, widely expressed. Highly expressed in neurons of dorsal root ganglia and dorsal horn of the spinal cord (at protein level). Expressed in astrocytes (at protein level). In cartilage, dominantly expressed in the chondrocyte territorial matrix.

Its subcellular location is the secreted. It localises to the cytoplasm. The protein localises to the cell junction. It is found in the gap junction. Immediate-early protein playing a role in various cellular processes including proliferation, adhesion, migration, differentiation and survival. Acts by binding to integrins or membrane receptors such as NOTCH1. Essential regulator of hematopoietic stem and progenitor cell function. Inhibits myogenic differentiation through the activation of Notch-signaling pathway. Inhibits vascular smooth muscle cells proliferation by increasing expression of cell-cycle regulators such as CDKN2B or CDKN1A independently of TGFB1 signaling. Ligand of integrins ITGAV:ITGB3 and ITGA5:ITGB1, acts directly upon endothelial cells to stimulate pro-angiogenic activities and induces angiogenesis. In endothelial cells, supports cell adhesion, induces directed cell migration (chemotaxis) and promotes cell survival. Also plays a role in cutaneous wound healing acting as integrin receptor ligand. Supports skin fibroblast adhesion through ITGA5:ITGB1 and ITGA6:ITGB1 and induces fibroblast chemotaxis through ITGAV:ITGB5. Seems to enhance bFGF-induced DNA synthesis in fibroblasts. Involved in bone regeneration as a negative regulator. Enhances the articular chondrocytic phenotype, whereas it repressed the one representing endochondral ossification. Impairs pancreatic beta-cell function, inhibits beta-cell proliferation and insulin secretion. Plays a role as negative regulator of endothelial pro-inflammatory activation reducing monocyte adhesion, its anti-inflammatory effects occur secondary to the inhibition of NF-kappaB signaling pathway. Contributes to the control and coordination of inflammatory processes in atherosclerosis. Attenuates inflammatory pain through regulation of IL1B- and TNF-induced MMP9, MMP2 and CCL2 expression. Inhibits MMP9 expression through ITGB1 engagement. Brain osteoanabolic hormone. During lactation, maintains the maternal skeleton and viability of offspring. This chain is CCN family member 3 (Ccn3), found in Rattus norvegicus (Rat).